We begin with the raw amino-acid sequence, 199 residues long: Small ribosomal subunit protein uS4 (199 aa).

The 63-residue stretch at 91–153 (ARLDNVVYRM…SKNFVVIKEA (63 aa)) folds into the S4 RNA-binding domain.

Belongs to the universal ribosomal protein uS4 family. In terms of assembly, part of the 30S ribosomal subunit. Contacts protein S5. The interaction surface between S4 and S5 is involved in control of translational fidelity.

Its function is as follows. One of the primary rRNA binding proteins, it binds directly to 16S rRNA where it nucleates assembly of the body of the 30S subunit. With S5 and S12 plays an important role in translational accuracy. The polypeptide is Small ribosomal subunit protein uS4 (Exiguobacterium sibiricum (strain DSM 17290 / CCUG 55495 / CIP 109462 / JCM 13490 / 255-15)).